The chain runs to 251 residues: Octanoyltransferase (251 aa).

Residues 56–241 (ADTGDEIWVV…NLDGASAAAD (186 aa)) enclose the BPL/LPL catalytic domain. Residues 96–103 (RGGQITYH), 168–170 (ALG), and 181–183 (GLS) contribute to the substrate site. Cys-199 acts as the Acyl-thioester intermediate in catalysis.

This sequence belongs to the LipB family.

The protein resides in the cytoplasm. It carries out the reaction octanoyl-[ACP] + L-lysyl-[protein] = N(6)-octanoyl-L-lysyl-[protein] + holo-[ACP] + H(+). The protein operates within protein modification; protein lipoylation via endogenous pathway; protein N(6)-(lipoyl)lysine from octanoyl-[acyl-carrier-protein]: step 1/2. Functionally, catalyzes the transfer of endogenously produced octanoic acid from octanoyl-acyl-carrier-protein onto the lipoyl domains of lipoate-dependent enzymes. Lipoyl-ACP can also act as a substrate although octanoyl-ACP is likely to be the physiological substrate. The protein is Octanoyltransferase of Burkholderia orbicola (strain AU 1054).